A 138-amino-acid chain; its full sequence is Spermidine export protein MdtJ (138 aa).

Helical transmembrane passes span 1–21 (MIYWLFLAMAIITEVIGTLSM), 30–50 (VVGMAVMYIMIATSYILLAMA), 54–74 (VALGVAYALWEGVGILFITVF), and 81–101 (ESLSLMKVGGLALLITGIMLI).

This sequence belongs to the drug/metabolite transporter (DMT) superfamily. Small multidrug resistance (SMR) (TC 2.A.7.1) family. MdtJ subfamily. As to quaternary structure, forms a complex with MdtI.

The protein localises to the cell inner membrane. Functionally, catalyzes the excretion of spermidine. This Photorhabdus laumondii subsp. laumondii (strain DSM 15139 / CIP 105565 / TT01) (Photorhabdus luminescens subsp. laumondii) protein is Spermidine export protein MdtJ.